A 103-amino-acid polypeptide reads, in one-letter code: Small ribosomal subunit protein uS10 (103 aa).

It belongs to the universal ribosomal protein uS10 family. As to quaternary structure, part of the 30S ribosomal subunit.

In terms of biological role, involved in the binding of tRNA to the ribosomes. The polypeptide is Small ribosomal subunit protein uS10 (Hydrogenovibrio crunogenus (strain DSM 25203 / XCL-2) (Thiomicrospira crunogena)).